A 329-amino-acid polypeptide reads, in one-letter code: Chlorophyllase-1, chloroplastic (329 aa).

Residues M1 to T21 constitute a chloroplast transit peptide. Residues G145 to G149 carry the GXSXG motif. The active-site Nucleophile is the S147. Residues D169 and H242 each act as charge relay system in the active site.

The protein belongs to the AB hydrolase superfamily. Lipase family.

Its subcellular location is the plastid. The protein localises to the chloroplast. The enzyme catalyses a chlorophyll + H2O = a chlorophyllide + phytol + H(+). The protein operates within porphyrin-containing compound metabolism; chlorophyll degradation. Catalyzes the hydrolysis of ester bond in chlorophyll to yield chlorophyllide and phytol. The chain is Chlorophyllase-1, chloroplastic (CHLASE1) from Citrus sinensis (Sweet orange).